A 202-amino-acid chain; its full sequence is 3-isopropylmalate dehydratase small subunit (202 aa).

This sequence belongs to the LeuD family. LeuD type 1 subfamily. Heterodimer of LeuC and LeuD.

The catalysed reaction is (2R,3S)-3-isopropylmalate = (2S)-2-isopropylmalate. The protein operates within amino-acid biosynthesis; L-leucine biosynthesis; L-leucine from 3-methyl-2-oxobutanoate: step 2/4. Its function is as follows. Catalyzes the isomerization between 2-isopropylmalate and 3-isopropylmalate, via the formation of 2-isopropylmaleate. The polypeptide is 3-isopropylmalate dehydratase small subunit (Nocardioides sp. (strain ATCC BAA-499 / JS614)).